We begin with the raw amino-acid sequence, 157 residues long: SsrA-binding protein (157 aa).

The interval 133-157 (LHDKRESEKKRDWGREKGRLLRARG) is disordered. Over residues 135–151 (DKRESEKKRDWGREKGR) the composition is skewed to basic and acidic residues.

Belongs to the SmpB family.

It localises to the cytoplasm. Its function is as follows. Required for rescue of stalled ribosomes mediated by trans-translation. Binds to transfer-messenger RNA (tmRNA), required for stable association of tmRNA with ribosomes. tmRNA and SmpB together mimic tRNA shape, replacing the anticodon stem-loop with SmpB. tmRNA is encoded by the ssrA gene; the 2 termini fold to resemble tRNA(Ala) and it encodes a 'tag peptide', a short internal open reading frame. During trans-translation Ala-aminoacylated tmRNA acts like a tRNA, entering the A-site of stalled ribosomes, displacing the stalled mRNA. The ribosome then switches to translate the ORF on the tmRNA; the nascent peptide is terminated with the 'tag peptide' encoded by the tmRNA and targeted for degradation. The ribosome is freed to recommence translation, which seems to be the essential function of trans-translation. The sequence is that of SsrA-binding protein from Nitrobacter winogradskyi (strain ATCC 25391 / DSM 10237 / CIP 104748 / NCIMB 11846 / Nb-255).